A 660-amino-acid chain; its full sequence is DNA mismatch repair protein MutL (660 aa).

This sequence belongs to the DNA mismatch repair MutL/HexB family.

In terms of biological role, this protein is involved in the repair of mismatches in DNA. It is required for dam-dependent methyl-directed DNA mismatch repair. May act as a 'molecular matchmaker', a protein that promotes the formation of a stable complex between two or more DNA-binding proteins in an ATP-dependent manner without itself being part of a final effector complex. The sequence is that of DNA mismatch repair protein MutL from Streptococcus equi subsp. equi (strain 4047).